A 276-amino-acid chain; its full sequence is N-acyl homoserine lactonase AiiB (276 aa).

6 residues coordinate Zn(2+): H111, H113, H116, H191, D213, and H259.

It belongs to the metallo-beta-lactamase superfamily. Requires Zn(2+) as cofactor.

It carries out the reaction an N-acyl-L-homoserine lactone + H2O = an N-acyl-L-homoserine + H(+). This is N-acyl homoserine lactonase AiiB from Agrobacterium fabrum (strain C58 / ATCC 33970) (Agrobacterium tumefaciens (strain C58)).